A 290-amino-acid polypeptide reads, in one-letter code: PIH1 domain-containing protein 1 (290 aa).

Phosphoserine occurs at positions 12 and 173.

This sequence belongs to the PIH1 family. Component of the R2TP complex composed at least of RUVBL1, RUVBL2, RPAP3 and PIHD1. Component of the PAQosome complex which is responsible for the biogenesis of several protein complexes and which consists of R2TP complex members RUVBL1, RUVBL2, RPAP3 and PIH1D1, URI complex members PFDN2, PFDN6, PDRG1, UXT and URI1 as well as ASDURF, POLR2E and DNAAF10/WDR92. Interacts with phosphorylated TELO2 and mediates interaction of TELO2 with the R2TP complex. Interacts with phosphorylated ECD, EFTUD2/SNRP116, RPB1 and UBR5 and with RPB1 in a phosphorylation-independent manner. Interacts with the core C/D box snoRNP particle components NOP58 and FBL and with RUVBL1/TIP49. Interacts with RPAP3 and DNAAF10. Interacts with histone H4 and with SWI/SNF complex member SMARCB1/SNF5. Interacts with the mTORC1 complex member RPTOR. Interacts with MSL1. In terms of tissue distribution, expressed at low levels in normal mammary epithelial cells (at protein level). Highest expression in lung, leukocyte and placenta. Expressed at lower levels in brain, prostate, colon, heart, small intestine, liver, ovary, pancreas, skeletal muscle, spleen, testis and thymus.

It localises to the nucleus. Involved in the assembly of C/D box small nucleolar ribonucleoprotein (snoRNP) particles. Recruits the SWI/SNF complex to the core promoter of rRNA genes and enhances pre-rRNA transcription. Mediates interaction of TELO2 with the R2TP complex which is necessary for the stability of MTOR and SMG1. Positively regulates the assembly and activity of the mTORC1 complex. The chain is PIH1 domain-containing protein 1 (PIH1D1) from Homo sapiens (Human).